The primary structure comprises 163 residues: Lipoprotein signal peptidase (163 aa).

A run of 3 helical transmembrane segments spans residues 11–31 (ILIAVFVVIFDQVTKYIIATT), 63–83 (KMTFFFIITIIILIALVYFFI), and 88–108 (YNLFMQVAISLLFAGALGNFI). Active-site residues include Asp-118 and Asp-136. A helical transmembrane segment spans residues 131–151 (IFNIADSSLTIGVILIIIALL).

Belongs to the peptidase A8 family.

Its subcellular location is the cell membrane. The catalysed reaction is Release of signal peptides from bacterial membrane prolipoproteins. Hydrolyzes -Xaa-Yaa-Zaa-|-(S,diacylglyceryl)Cys-, in which Xaa is hydrophobic (preferably Leu), and Yaa (Ala or Ser) and Zaa (Gly or Ala) have small, neutral side chains.. The protein operates within protein modification; lipoprotein biosynthesis (signal peptide cleavage). In terms of biological role, this protein specifically catalyzes the removal of signal peptides from prolipoproteins. This is Lipoprotein signal peptidase from Staphylococcus aureus (strain Mu3 / ATCC 700698).